The sequence spans 191 residues: MEKYIVFVLSYILGSIPFSLVITKIKGINLREVGSGNIGATNVARTGSKCIAALALLLDSLKGFIAVYIAKQFFDDGSFHMYASAILVVLGHMFPVWLKFSGGKGVATTLGILIALNISLVLAFVFVWLAVFFAFRYSSLASLTSTIAAVLSSFFFQRDLFFTLLTVAILIFFKHYRNIVNLLQGRERKFS.

A run of 5 helical transmembrane segments spans residues 5–25 (IVFV…ITKI), 50–70 (CIAA…VYIA), 78–98 (SFHM…PVWL), 112–132 (ILIA…LAVF), and 153–173 (SFFF…LIFF).

Belongs to the PlsY family. In terms of assembly, probably interacts with PlsX.

It localises to the cell membrane. It carries out the reaction an acyl phosphate + sn-glycerol 3-phosphate = a 1-acyl-sn-glycero-3-phosphate + phosphate. It functions in the pathway lipid metabolism; phospholipid metabolism. Catalyzes the transfer of an acyl group from acyl-phosphate (acyl-PO(4)) to glycerol-3-phosphate (G3P) to form lysophosphatidic acid (LPA). This enzyme utilizes acyl-phosphate as fatty acyl donor, but not acyl-CoA or acyl-ACP. This is Glycerol-3-phosphate acyltransferase from Wolbachia sp. subsp. Brugia malayi (strain TRS).